Here is a 597-residue protein sequence, read N- to C-terminus: Putative Xaa-Pro dipeptidyl-peptidase (597 aa).

Catalysis depends on charge relay system residues serine 224, aspartate 336, and histidine 367.

This sequence belongs to the peptidase S15 family.

The enzyme catalyses Hydrolyzes Xaa-Pro-|- bonds to release unblocked, N-terminal dipeptides from substrates including Ala-Pro-|-p-nitroanilide and (sequentially) Tyr-Pro-|-Phe-Pro-|-Gly-Pro-|-Ile.. The chain is Putative Xaa-Pro dipeptidyl-peptidase from Bacillus anthracis.